Reading from the N-terminus, the 155-residue chain is 3-dehydroquinate dehydratase (155 aa).

The active-site Proton acceptor is tyrosine 32. The substrate site is built by asparagine 84, histidine 90, and aspartate 97. The active-site Proton donor is the histidine 110. Substrate is bound by residues 111–112 (LS) and arginine 121.

The protein belongs to the type-II 3-dehydroquinase family. Homododecamer.

It carries out the reaction 3-dehydroquinate = 3-dehydroshikimate + H2O. It functions in the pathway metabolic intermediate biosynthesis; chorismate biosynthesis; chorismate from D-erythrose 4-phosphate and phosphoenolpyruvate: step 3/7. Its function is as follows. Catalyzes a trans-dehydration via an enolate intermediate. The polypeptide is 3-dehydroquinate dehydratase (Ralstonia pickettii (strain 12J)).